A 613-amino-acid polypeptide reads, in one-letter code: Ribosome-associated molecular chaperone SSB (613 aa).

Positions 1-391 (MADGVFQGAI…ILTGQSTSDE (391 aa)) are nucleotide binding domain (NBD). Residues 16–18 (TTY), Lys73, 205–207 (GGT), 271–278 (ERAKRTLS), and Gly342 each bind ATP. An inter-domain linker region spans residues 392 to 402 (TKDLLLLDVAP). The interval 403–613 (LSLGVGMQGD…RVVTKAMSSR (211 aa)) is substrate binding domain (SBD). The lid domain (SBDalpha) stretch occupies residues 516 to 612 (SEDIEKMVNQ…KRVVTKAMSS (97 aa)). The short motif at 574–582 (IEAALADAL) is the Nuclear export signal element.

It belongs to the heat shock protein 70 family. Ssb-type Hsp70 subfamily. In terms of assembly, binds to ribosomes. Binds close to the ribosomal tunnel exit via contacts with both ribosomal proteins and rRNA. Directly interacts with nascent polypeptides. This interaction is dependent on the ribosome-associated complex (RAC). Interacts with SSE1. Interacts with FES1.

Its subcellular location is the cytoplasm. It carries out the reaction ATP + H2O = ADP + phosphate + H(+). Functionally, ribosome-bound, Hsp70-type chaperone that assists in the cotranslational folding of newly synthesized proteins in the cytosol. Stimulates folding by interacting with nascent chains, binding to short, largely hydrophobic sequences exposed by unfolded proteins, thereby stabilizing longer, more slowly translated, and aggregation-prone nascent polypeptides and domains that cannot fold stably until fully synthesized. The Hsp70-protein substrate interaction depends on ATP-binding and on allosteric regulation between the NBD and the SBD. The ATP-bound state is characterized by a fast exchange rate of substrate (low affinity state), while in the ADP-bound state exchange is much slower (high affinity state). During the Hsp70 cycle, the chaperone switches between the ATP-bound state (open conformation) and the ADP-bound state (closed conformation) by major conformational rearrangements involving mainly the lid domain. Ssb cooperates with a specific Hsp40/Hsp70 co-chaperone termed the ribosome-associated complex (RAC), which stimulates the ATPase activity of the ribosome-associated pool of Ssbs and switches it to the high affinity substrate binding state. Hsp110 chaperone SSE1 and FES1 act as nucleotide exchange factors that cause substrate release. This chain is Ribosome-associated molecular chaperone SSB (SSB1), found in Candida glabrata (strain ATCC 2001 / BCRC 20586 / JCM 3761 / NBRC 0622 / NRRL Y-65 / CBS 138) (Yeast).